Reading from the N-terminus, the 224-residue chain is MISWLKGEKVHTWKISSRKGVVLNVGGVGYEIQLLPKQIDKAEVLNEFELWIHQIDREDGTSLYGFIEVNQRDLFREIISVNGIGPQIGMAMLEEFEVPQLVNAIENKESNLLTKTQGIGKRIAERLIVELRNKLQRFTDNDKTIHENKKGIEANQFSKYIDEIYLILNSLGYVDNEIKESIKIITINEKENSLLLNSSSAEEKAELMDKHLKEILMKLSEKTT.

The tract at residues 1 to 67 is domain I; sequence MISWLKGEKV…EDGTSLYGFI (67 aa). Residues 68–146 are domain II; that stretch reads EVNQRDLFRE…RFTDNDKTIH (79 aa). The segment at 147 to 155 is flexible linker; that stretch reads ENKKGIEAN. The tract at residues 156-224 is domain III; the sequence is QFSKYIDEIY…ILMKLSEKTT (69 aa).

This sequence belongs to the RuvA family. In terms of assembly, homotetramer. Forms an RuvA(8)-RuvB(12)-Holliday junction (HJ) complex. HJ DNA is sandwiched between 2 RuvA tetramers; dsDNA enters through RuvA and exits via RuvB. An RuvB hexamer assembles on each DNA strand where it exits the tetramer. Each RuvB hexamer is contacted by two RuvA subunits (via domain III) on 2 adjacent RuvB subunits; this complex drives branch migration. In the full resolvosome a probable DNA-RuvA(4)-RuvB(12)-RuvC(2) complex forms which resolves the HJ.

The protein resides in the cytoplasm. Functionally, the RuvA-RuvB-RuvC complex processes Holliday junction (HJ) DNA during genetic recombination and DNA repair, while the RuvA-RuvB complex plays an important role in the rescue of blocked DNA replication forks via replication fork reversal (RFR). RuvA specifically binds to HJ cruciform DNA, conferring on it an open structure. The RuvB hexamer acts as an ATP-dependent pump, pulling dsDNA into and through the RuvAB complex. HJ branch migration allows RuvC to scan DNA until it finds its consensus sequence, where it cleaves and resolves the cruciform DNA. This Prochlorococcus marinus (strain NATL1A) protein is Holliday junction branch migration complex subunit RuvA.